A 361-amino-acid polypeptide reads, in one-letter code: tRNA-specific 2-thiouridylase MnmA (361 aa).

ATP is bound by residues 6–13 and I32; that span reads LVSGGVDS. Residues 93–95 are interaction with target base in tRNA; it reads NPD. C98 (nucleophile) is an active-site residue. Residues C98 and C193 are joined by a disulfide bond. Residue G121 participates in ATP binding. An interaction with tRNA region spans residues 143–145; sequence KDQ. C193 acts as the Cysteine persulfide intermediate in catalysis.

Belongs to the MnmA/TRMU family.

The protein resides in the cytoplasm. It carries out the reaction S-sulfanyl-L-cysteinyl-[protein] + uridine(34) in tRNA + AH2 + ATP = 2-thiouridine(34) in tRNA + L-cysteinyl-[protein] + A + AMP + diphosphate + H(+). Functionally, catalyzes the 2-thiolation of uridine at the wobble position (U34) of tRNA, leading to the formation of s(2)U34. The protein is tRNA-specific 2-thiouridylase MnmA of Porphyromonas gingivalis (strain ATCC 33277 / DSM 20709 / CIP 103683 / JCM 12257 / NCTC 11834 / 2561).